Consider the following 305-residue polypeptide: MENKYTHGVLFYHEHSGLKNINQGIGEVTTALSSICKHLSIQLSENEGDIIKYCQEIKTKNYAKDVDILFILGGDGTVNELINGVMTHDLQLPIGILPGGTFNDFTKTLNIAPNHKQASEQMISAQVGKYDVIKINNQYALNFVGLGLIVQNAENVQDGSKDIFGKLSYIGSTVKTLLNPTQFNYQLSIDDKTYSGETTMILTANGPFIGGSRIPLTDLSPQDGELNTFIFNEQSFSILNDIFKKRDSMNWNEITQGIEHIPGKKISLTTDPAMKVDIDGEISLETPIDIEVIPNAIQLLTVNDL.

Residues 3–139 (NKYTHGVLFY…YDVIKINNQY (137 aa)) form the DAGKc domain. ATP is bound by residues Ser44, 74 to 80 (GDGTVNE), and Thr101. Residues Ser220, Asp223, and Glu225 each contribute to the Mg(2+) site. The active-site Proton acceptor is Glu281.

It belongs to the diacylglycerol/lipid kinase family. It depends on Mg(2+) as a cofactor.

Functionally, may catalyze the ATP-dependent phosphorylation of lipids other than diacylglycerol (DAG). This is Putative lipid kinase SAS0691 from Staphylococcus aureus (strain MSSA476).